The chain runs to 166 residues: Mitochondrial fission process protein 1 (166 aa).

A run of 2 helical transmembrane segments spans residues 34–54 and 80–100; these read SLVP…YVLA and AVVD…GFTI. At K123 the chain carries N6-succinyllysine. Residues 129-149 form a helical membrane-spanning segment; it reads LGLLTIPIIIHPIDRSVDFLL.

Belongs to the MTFP1 family.

Its subcellular location is the mitochondrion inner membrane. In terms of biological role, involved in the mitochondrial division probably by regulating membrane fission. Loss-of-function induces the release of cytochrome c, which activates the caspase cascade and leads to apoptosis. The sequence is that of Mitochondrial fission process protein 1 (MTFP1) from Homo sapiens (Human).